The chain runs to 559 residues: Spermidine/putrescine import ATP-binding protein PotA (559 aa).

The 442-residue stretch at 7-448 (IEIEGLNKTF…PKTEWIANFI (442 aa)) folds into the ABC transporter domain. ATP is bound at residue 40 to 47 (GPSGCGKT). The insert stretch occupies residues 108-317 (WTKLDEIPKL…EAFEKRYLSR (210 aa)).

The protein belongs to the ABC transporter superfamily. Spermidine/putrescine importer (TC 3.A.1.11.1) family. In terms of assembly, the complex is composed of two ATP-binding proteins (PotA), two transmembrane proteins (PotB and PotC) and a solute-binding protein (PotD).

It is found in the cell membrane. The enzyme catalyses ATP + H2O + polyamine-[polyamine-binding protein]Side 1 = ADP + phosphate + polyamineSide 2 + [polyamine-binding protein]Side 1.. Part of the ABC transporter complex PotABCD involved in spermidine/putrescine import. Responsible for energy coupling to the transport system. The chain is Spermidine/putrescine import ATP-binding protein PotA from Mycoplasma genitalium (strain ATCC 33530 / DSM 19775 / NCTC 10195 / G37) (Mycoplasmoides genitalium).